Consider the following 557-residue polypeptide: Glucose-6-phosphate isomerase (557 aa).

Residue alanine 2 is modified to N-acetylalanine. Lysine 12 bears the N6-acetyllysine mark. Residue serine 107 is modified to Phosphoserine. Lysine 142 bears the N6-acetyllysine mark. Residue 159–160 (GS) participates in D-glucose 6-phosphate binding. Serine 185 carries the post-translational modification Phosphoserine; by CK2. D-glucose 6-phosphate is bound at residue 210 to 215 (SKTFTT). A Phosphothreonine modification is found at threonine 250. 3 residues coordinate D-glucose 6-phosphate: glutamine 354, glutamate 358, and histidine 389. Residue glutamate 358 is the Proton donor of the active site. Histidine 389 is a catalytic residue. Phosphoserine is present on serine 455. Lysine 519 is a D-glucose 6-phosphate binding site. Lysine 519 is an active-site residue.

Belongs to the GPI family. In terms of assembly, homodimer; in the catalytically active form. Monomer in the secreted form. Phosphorylation at Ser-185 by CK2 has been shown to decrease enzymatic activity and may contribute to secretion by a non-classical secretory pathway. In terms of processing, ISGylated.

It is found in the cytoplasm. The protein resides in the secreted. The enzyme catalyses alpha-D-glucose 6-phosphate = beta-D-fructose 6-phosphate. The protein operates within carbohydrate degradation; glycolysis; D-glyceraldehyde 3-phosphate and glycerone phosphate from D-glucose: step 2/4. Functionally, in the cytoplasm, catalyzes the conversion of glucose-6-phosphate to fructose-6-phosphate, the second step in glycolysis, and the reverse reaction during gluconeogenesis. Besides it's role as a glycolytic enzyme, also acts as a secreted cytokine: acts as an angiogenic factor (AMF) that stimulates endothelial cell motility. Acts as a neurotrophic factor, neuroleukin, for spinal and sensory neurons. It is secreted by lectin-stimulated T-cells and induces immunoglobulin secretion. The sequence is that of Glucose-6-phosphate isomerase from Bos taurus (Bovine).